The primary structure comprises 116 residues: MFIEVVKSKIHRVTVTEANLNYIGSITIDEDLLDAANLIANEKVSIVNNNNGERFETYIIKGERGSGVVCLNGAAARKAQPGDIIIVMSYAMMDFEEAKTFKPSVVFPDTATNKLI.

The Schiff-base intermediate with substrate; via pyruvic acid role is filled by serine 25. Serine 25 is modified (pyruvic acid (Ser)). Threonine 57 serves as a coordination point for substrate. Tyrosine 58 acts as the Proton donor in catalysis. Residue 73-75 coordinates substrate; sequence GAA.

Belongs to the PanD family. Heterooctamer of four alpha and four beta subunits. Requires pyruvate as cofactor. Is synthesized initially as an inactive proenzyme, which is activated by self-cleavage at a specific serine bond to produce a beta-subunit with a hydroxyl group at its C-terminus and an alpha-subunit with a pyruvoyl group at its N-terminus.

Its subcellular location is the cytoplasm. The enzyme catalyses L-aspartate + H(+) = beta-alanine + CO2. It functions in the pathway cofactor biosynthesis; (R)-pantothenate biosynthesis; beta-alanine from L-aspartate: step 1/1. Catalyzes the pyruvoyl-dependent decarboxylation of aspartate to produce beta-alanine. The polypeptide is Aspartate 1-decarboxylase (Parabacteroides distasonis (strain ATCC 8503 / DSM 20701 / CIP 104284 / JCM 5825 / NCTC 11152)).